The primary structure comprises 288 residues: ATP synthase gamma chain (288 aa).

It belongs to the ATPase gamma chain family. As to quaternary structure, F-type ATPases have 2 components, CF(1) - the catalytic core - and CF(0) - the membrane proton channel. CF(1) has five subunits: alpha(3), beta(3), gamma(1), delta(1), epsilon(1). CF(0) has three main subunits: a, b and c.

Its subcellular location is the cell inner membrane. Its function is as follows. Produces ATP from ADP in the presence of a proton gradient across the membrane. The gamma chain is believed to be important in regulating ATPase activity and the flow of protons through the CF(0) complex. In Rickettsia felis (strain ATCC VR-1525 / URRWXCal2) (Rickettsia azadi), this protein is ATP synthase gamma chain.